A 233-amino-acid chain; its full sequence is Rano class II histocompatibility antigen, A beta chain (233 aa).

Positions 1–80 (DFVYQFKGLC…DTVCRYNYEE (80 aa)) are beta-1. Topologically, residues 1 to 194 (DFVYQFKGLC…RAQSESAQSK (194 aa)) are extracellular. N-linked (GlcNAc...) asparagine glycosylation is present at Asn14. Residues 81 to 184 (TEVPTSLRRL…SLESPVTVEW (104 aa)) are beta-2. The 89-residue stretch at 93–181 (PNVAISLSRT…DHASLESPVT (89 aa)) folds into the Ig-like C1-type domain. Residues 185 to 194 (RAQSESAQSK) are connecting peptide. The chain crosses the membrane as a helical span at residues 195–215 (MLSGIGGLVLGVIFLGLGLFI). Residues 216-233 (RHKRQKGPQGPPPAGLLQ) are Cytoplasmic-facing.

It belongs to the MHC class II family.

Its subcellular location is the membrane. Functionally, involved in the presentation of foreign antigens to the immune system. This Rattus norvegicus (Rat) protein is Rano class II histocompatibility antigen, A beta chain (RT1-B).